We begin with the raw amino-acid sequence, 218 residues long: Small ribosomal subunit protein uS3 (218 aa).

Positions 38-106 (IREFINQRLS…RVHINILEIK (69 aa)) constitute a KH type-2 domain.

It belongs to the universal ribosomal protein uS3 family. In terms of assembly, part of the 30S ribosomal subunit. Forms a tight complex with proteins S10 and S14.

Its function is as follows. Binds the lower part of the 30S subunit head. Binds mRNA in the 70S ribosome, positioning it for translation. The chain is Small ribosomal subunit protein uS3 from Bacillus licheniformis (strain ATCC 14580 / DSM 13 / JCM 2505 / CCUG 7422 / NBRC 12200 / NCIMB 9375 / NCTC 10341 / NRRL NRS-1264 / Gibson 46).